Consider the following 416-residue polypeptide: cAMP-dependent protein kinase regulatory subunit (416 aa).

The interval 2–183 is dimerization and phosphorylation; the sequence is VSSLPKESQA…RLEKSIRNNF (182 aa). A phosphoserine mark is found at Ser3, Ser4, Ser9, Ser68, Ser70, Ser74, Ser77, Ser79, Ser81, Ser83, and Ser84. A dimerization/docking domain (D/D) region spans residues 8-45; that stretch reads ESQAELQLFQNEINAANPSDFLQFSANYFNKRLEQQRA. A disordered region spans residues 65–138; the sequence is PEESFSRPQS…TSTPPLPMHF (74 aa). The segment covering 70 to 84 has biased composition (low complexity); it reads SRPQSAQSQSRSRSS. Thr129 carries the phosphothreonine modification. Ser130 is subject to Phosphoserine. Thr131 and Thr144 each carry phosphothreonine. The Inhibitor sequence (IS) motif lies at 142 to 146; that stretch reads RRTSV. Ser145 is modified (phosphoserine; by autocatalysis). Ser147 is modified (phosphoserine). Residues Thr150 and Thr160 each carry the phosphothreonine modification. 3',5'-cyclic AMP contacts are provided by residues 184–301, Glu249, Arg258, 302–416, Glu368, and Arg377; these read LFNK…KSMP and VLKS…PTRH.

The protein belongs to the cAMP-dependent kinase regulatory chain family. The inactive holoenzyme of cAMP-dependent protein kinase is a tetramer, composed of 2 regulatory subunits (R, encoded by BCY1) and two catalytic subunits (C, encoded by the 3 partially redundant TPK1, TPK2, and TPK3 genes). Activation by cAMP causes dissociation of the holoenzyme, producing 2 active catalytic monomers C and a regulatory dimer R(2). Post-translationally, phosphorylated by YAK1 in response to glucose starvation. Phosphorylated by MCK1 at Thr-129 upon TOR complex 1 (TORC1) inhibition. Thr-129 phosphorylation activates BCY1 to inhibit PKA. TORC1 inhibits phosphorylation of RxxS/T sites but has no effect on Ser-145 phosphorylation. The phosphorylation sites can be clustered in several groups, all localized in the N-terminal part. The first cluster termed cluster I (CI) is located close to the N-terminus and includes Ser-3, Ser-4 and Ser-9. The second includes Ser-68, Ser-70, Ser-74, Ser-77, Ser-79, Ser-81, Ser-83, and Ser-84. This cluster of phosphorylation sites, termed cluster II (CII), is important for BCY1 cytoplasmic localization and function. The third cluster of phosphorylated residues consists of Thr-144, Ser-145, Ser-147, Thr-150, and Thr-160. This cluster falls within or near the so-called autoinhibitory domain where the catalytic subunit of PKA autophosphorylates the highly conserved Ser-145 to inhibit BCY1. A last cluster of phosphorylated residues included Thr-129, Ser-130, and Thr-131 and is termed cluster III (CIII). Sites in CIII (and to a lesser extent in CII) are hyperphosphorylated in response to rapamycin.

Its subcellular location is the cytoplasm. It localises to the nucleus. In terms of biological role, regulatory subunit of the cyclic AMP-dependent protein kinase (PKA), an effector of the Ras/cAMP pathway. Inhibits PKA activity in the absence of cAMP. cAMP activates PKA and promotes growth and proliferation in response to good nutrient conditions. Together with ZDS1, provides a negative feedback control on the cell wall integrity-signaling pathway by acting as a negative regulator of MAP kinase SLT2/MPK1. The polypeptide is cAMP-dependent protein kinase regulatory subunit (BCY1) (Saccharomyces cerevisiae (strain ATCC 204508 / S288c) (Baker's yeast)).